Here is a 243-residue protein sequence, read N- to C-terminus: Epoxyqueuosine reductase QueH (243 aa).

Positions 1 to 16 are enriched in basic and acidic residues; the sequence is MHRTKLEQKQPHFDAQ. A disordered region spans residues 1–30; that stretch reads MHRTKLEQKQPHFDAQKRRKKECKNSNTPF. [4Fe-4S] cluster-binding residues include Cys49, Cys50, Cys128, and Cys131. An intrachain disulfide couples Cys211 to Cys213.

It belongs to the QueH family.

It catalyses the reaction epoxyqueuosine(34) in tRNA + AH2 = queuosine(34) in tRNA + A + H2O. It functions in the pathway tRNA modification; tRNA-queuosine biosynthesis. Its function is as follows. Catalyzes the conversion of epoxyqueuosine (oQ) to queuosine (Q), which is a hypermodified base found in the wobble positions of tRNA(Asp), tRNA(Asn), tRNA(His) and tRNA(Tyr). This is Epoxyqueuosine reductase QueH from Histophilus somni (strain 129Pt) (Haemophilus somnus).